Here is a 185-residue protein sequence, read N- to C-terminus: uncharacterized protein (185 aa).

Transmembrane regions (helical) follow at residues 4–24 (TYLT…SLSI), 54–74 (LALF…LKLI), 98–118 (LRMG…LLQN), 119–139 (VIWI…FTVY), and 153–173 (FILL…FIFI).

The protein localises to the cell membrane. This is an uncharacterized protein from Bacillus subtilis (strain 168).